Reading from the N-terminus, the 102-residue chain is Small ribosomal subunit protein uS10 (102 aa).

This sequence belongs to the universal ribosomal protein uS10 family. In terms of assembly, part of the 30S ribosomal subunit.

Involved in the binding of tRNA to the ribosomes. The protein is Small ribosomal subunit protein uS10 of Thermosipho africanus (strain TCF52B).